A 371-amino-acid chain; its full sequence is MAKQTPLYQQHLADGAKMVDFHGWMMPLHYGSQLDEHHIVRRDAGIFDVSHMTIVDLHGVRTREFLRYLLANDVAKLTQPGKALYTGMLNASGGVIDDLIVYFLTEDYFRLVVNSATREKDLAWIEQHAAAFGVDIRERDELALVAVQGPQAQEKVQGLLKAKGLSDEDVAAVASMKPFFGKQAGDFFVATTGYTGEAGYEIALPNEQVVDFWQQLLAVGVKPCGLGARDTLRLEAGMNLYGQDMDEGISPLAANMGWTIAWQPEDRQFIGREALVHQREKGTEQLVGLVLTEKGVLRNDLSVRFTDSDGVMREGVITSGSFSPTLGVSIALARVPAGIGEQAIVQIRNRELPVRVTKPGFVRAGKAIVQY.

The protein belongs to the GcvT family. The glycine cleavage system is composed of four proteins: P, T, L and H.

The catalysed reaction is N(6)-[(R)-S(8)-aminomethyldihydrolipoyl]-L-lysyl-[protein] + (6S)-5,6,7,8-tetrahydrofolate = N(6)-[(R)-dihydrolipoyl]-L-lysyl-[protein] + (6R)-5,10-methylene-5,6,7,8-tetrahydrofolate + NH4(+). Its function is as follows. The glycine cleavage system catalyzes the degradation of glycine. This is Aminomethyltransferase from Pectobacterium atrosepticum (strain SCRI 1043 / ATCC BAA-672) (Erwinia carotovora subsp. atroseptica).